The primary structure comprises 197 residues: Phosphoheptose isomerase (197 aa).

The SIS domain maps to 34–196 (MVHCLLSGNK…DHTLFPQDEQ (163 aa)). 49-51 (NGG) is a binding site for substrate. Zn(2+) contacts are provided by H58 and E62. Substrate contacts are provided by residues E62, 91 to 92 (ND), 117 to 119 (STS), S122, and Q172. Residues Q172 and H180 each contribute to the Zn(2+) site.

The protein belongs to the SIS family. GmhA subfamily. Homotetramer. Zn(2+) is required as a cofactor.

Its subcellular location is the cytoplasm. The enzyme catalyses 2 D-sedoheptulose 7-phosphate = D-glycero-alpha-D-manno-heptose 7-phosphate + D-glycero-beta-D-manno-heptose 7-phosphate. It participates in carbohydrate biosynthesis; D-glycero-D-manno-heptose 7-phosphate biosynthesis; D-glycero-alpha-D-manno-heptose 7-phosphate and D-glycero-beta-D-manno-heptose 7-phosphate from sedoheptulose 7-phosphate: step 1/1. In terms of biological role, catalyzes the isomerization of sedoheptulose 7-phosphate in D-glycero-D-manno-heptose 7-phosphate. The polypeptide is Phosphoheptose isomerase (Shewanella halifaxensis (strain HAW-EB4)).